Here is a 536-residue protein sequence, read N- to C-terminus: CTP synthase (536 aa).

The amidoligase domain stretch occupies residues 1-266 (MKTKFIFVTG…DEQVVEKLNI (266 aa)). Ser-14 is a CTP binding site. Ser-14 contacts UTP. Residues 15 to 20 (SIGKGL) and Asp-72 each bind ATP. Mg(2+) contacts are provided by Asp-72 and Glu-140. Residues 147 to 149 (DIE), 187 to 192 (KTKPTQ), and Lys-223 each bind CTP. UTP-binding positions include 187-192 (KTKPTQ) and Lys-223. The region spanning 292 to 534 (RIAIVGKYVN…IAAALDRKDK (243 aa)) is the Glutamine amidotransferase type-1 domain. Gly-354 is an L-glutamine binding site. Cys-381 serves as the catalytic Nucleophile; for glutamine hydrolysis. L-glutamine contacts are provided by residues 382-385 (LGMQ), Glu-405, and Arg-462. Active-site residues include His-507 and Glu-509.

The protein belongs to the CTP synthase family. Homotetramer.

It carries out the reaction UTP + L-glutamine + ATP + H2O = CTP + L-glutamate + ADP + phosphate + 2 H(+). The catalysed reaction is L-glutamine + H2O = L-glutamate + NH4(+). The enzyme catalyses UTP + NH4(+) + ATP = CTP + ADP + phosphate + 2 H(+). Its pathway is pyrimidine metabolism; CTP biosynthesis via de novo pathway; CTP from UDP: step 2/2. Allosterically activated by GTP, when glutamine is the substrate; GTP has no effect on the reaction when ammonia is the substrate. The allosteric effector GTP functions by stabilizing the protein conformation that binds the tetrahedral intermediate(s) formed during glutamine hydrolysis. Inhibited by the product CTP, via allosteric rather than competitive inhibition. Its function is as follows. Catalyzes the ATP-dependent amination of UTP to CTP with either L-glutamine or ammonia as the source of nitrogen. Regulates intracellular CTP levels through interactions with the four ribonucleotide triphosphates. The chain is CTP synthase from Geobacter sulfurreducens (strain ATCC 51573 / DSM 12127 / PCA).